A 102-amino-acid chain; its full sequence is Thioredoxin (102 aa).

A Thioredoxin domain is found at 2 to 102 (LHIDELTFEN…ILIHTINKYL (101 aa)). Residues cysteine 29 and cysteine 32 each act as nucleophile in the active site. A disulfide bridge links cysteine 29 with cysteine 32.

The protein belongs to the thioredoxin family.

It localises to the plastid. The protein localises to the chloroplast. Its function is as follows. Participates in various redox reactions through the reversible oxidation of its active center dithiol to a disulfide and catalyzes dithiol-disulfide exchange reactions. This is Thioredoxin (trxA) from Cyanidioschyzon merolae (strain NIES-3377 / 10D) (Unicellular red alga).